Here is a 141-residue protein sequence, read N- to C-terminus: Hemoglobin subunit alpha (141 aa).

Residues 1–141 enclose the Globin domain; it reads VLSGTDKSNI…VSTVLTSKYR (141 aa). Serine 3 carries the post-translational modification Phosphoserine. Residues lysine 7 and lysine 11 each carry the N6-succinyllysine modification. Lysine 16 is subject to N6-acetyllysine; alternate. Position 16 is an N6-succinyllysine; alternate (lysine 16). The residue at position 24 (tyrosine 24) is a Phosphotyrosine. A Phosphoserine modification is found at serine 35. Lysine 40 is modified (N6-succinyllysine). Serine 49 is subject to Phosphoserine. Histidine 58 is a binding site for O2. Heme b is bound at residue histidine 87. Serine 102 is modified (phosphoserine). Phosphothreonine is present on threonine 108. Serine 124 is modified (phosphoserine). Phosphothreonine is present on residues threonine 134 and threonine 137. Serine 138 carries the post-translational modification Phosphoserine.

This sequence belongs to the globin family. As to quaternary structure, heterotetramer of two alpha chains and two beta chains. In terms of tissue distribution, red blood cells.

In terms of biological role, involved in oxygen transport from the lung to the various peripheral tissues. Its function is as follows. Hemopressin acts as an antagonist peptide of the cannabinoid receptor CNR1. Hemopressin-binding efficiently blocks cannabinoid receptor CNR1 and subsequent signaling. This chain is Hemoglobin subunit alpha (HBA), found in Talpa europaea (European mole).